A 519-amino-acid chain; its full sequence is Aspartokinase (519 aa).

Position 326 is a phosphoserine (S326). A Phosphothreonine modification is found at T328. Residues L436 to S518 form the ACT domain.

This sequence belongs to the aspartokinase family.

The enzyme catalyses L-aspartate + ATP = 4-phospho-L-aspartate + ADP. Its pathway is amino-acid biosynthesis; L-methionine biosynthesis via de novo pathway; L-homoserine from L-aspartate: step 1/3. It functions in the pathway amino-acid biosynthesis; L-threonine biosynthesis; L-threonine from L-aspartate: step 1/5. Functionally, phosphorylates aspartate, the first step in the biosynthesis of amino acids that derive from aspartate (the aspartate family of amino acids), including methioinine and threonine, the latter of which is a precursor to isoleucine. The protein is Aspartokinase of Schizosaccharomyces pombe (strain 972 / ATCC 24843) (Fission yeast).